Consider the following 228-residue polypeptide: Probable septum site-determining protein MinC (228 aa).

Belongs to the MinC family. In terms of assembly, interacts with MinD and FtsZ.

Cell division inhibitor that blocks the formation of polar Z ring septums. Rapidly oscillates between the poles of the cell to destabilize FtsZ filaments that have formed before they mature into polar Z rings. Prevents FtsZ polymerization. This is Probable septum site-determining protein MinC from Bacillus mycoides (strain KBAB4) (Bacillus weihenstephanensis).